Reading from the N-terminus, the 313-residue chain is Ribosomal RNA small subunit methyltransferase H (313 aa).

S-adenosyl-L-methionine is bound by residues 35-37 (GGH), Asp55, Phe81, Asp103, and Gln110.

Belongs to the methyltransferase superfamily. RsmH family.

Its subcellular location is the cytoplasm. The enzyme catalyses cytidine(1402) in 16S rRNA + S-adenosyl-L-methionine = N(4)-methylcytidine(1402) in 16S rRNA + S-adenosyl-L-homocysteine + H(+). In terms of biological role, specifically methylates the N4 position of cytidine in position 1402 (C1402) of 16S rRNA. In Pseudomonas aeruginosa (strain ATCC 15692 / DSM 22644 / CIP 104116 / JCM 14847 / LMG 12228 / 1C / PRS 101 / PAO1), this protein is Ribosomal RNA small subunit methyltransferase H.